A 173-amino-acid chain; its full sequence is Flagellar assembly factor FliW (173 aa).

Residues 152-173 (STTVRRKASPPAAGEDKGDVQE) form a disordered region.

The protein belongs to the FliW family. In terms of assembly, interacts with translational regulator CsrA and flagellin(s).

Its subcellular location is the cytoplasm. Acts as an anti-CsrA protein, binds CsrA and prevents it from repressing translation of its target genes, one of which is flagellin. Binds to flagellin and participates in the assembly of the flagellum. The sequence is that of Flagellar assembly factor FliW from Nitratidesulfovibrio vulgaris (strain ATCC 29579 / DSM 644 / CCUG 34227 / NCIMB 8303 / VKM B-1760 / Hildenborough) (Desulfovibrio vulgaris).